A 379-amino-acid polypeptide reads, in one-letter code: Transcription termination factor 1b, mitochondrial (379 aa).

A mitochondrion-targeting transit peptide spans Met1–Thr37. Interaction with DNA regions lie at residues Arg151–Ser152, Gln229–Arg233, Ser306–Lys313, Ser337–Thr340, and Ser366–Lys373.

It belongs to the mTERF family. Monomer. Phosphoprotein with mostly four phosphate groups. While the DNA-binding activity is unaffected by the phosphorylation state, only the phosphorylated form of the protein is active for termination activity. Functioning seems to be regulated by phosphorylation. Expressed strongly in the heart and at lower levels in brain, liver and kidney.

The protein resides in the mitochondrion. In terms of biological role, transcription termination factor. Binds to a 28 bp region within the tRNA(Leu(uur)) gene at a position immediately adjacent to and downstream of the 16S rRNA gene; this region comprises a tridecamer sequence critical for directing accurate termination. Binds DNA along the major grove and promotes DNA bending and partial unwinding. Promotes base flipping. Transcription termination activity appears to be polarized with highest specificity for transcripts initiated on the light strand. This chain is Transcription termination factor 1b, mitochondrial, found in Mus musculus (Mouse).